The chain runs to 76 residues: Acyl carrier protein (76 aa).

A Carrier domain is found at 1–75; the sequence is MVFEKIKALI…DIVFYITKNT (75 aa). S35 is modified (O-(pantetheine 4'-phosphoryl)serine).

It belongs to the acyl carrier protein (ACP) family. 4'-phosphopantetheine is transferred from CoA to a specific serine of apo-ACP by AcpS. This modification is essential for activity because fatty acids are bound in thioester linkage to the sulfhydryl of the prosthetic group.

It is found in the cytoplasm. It participates in lipid metabolism; fatty acid biosynthesis. Carrier of the growing fatty acid chain in fatty acid biosynthesis. The protein is Acyl carrier protein of Onion yellows phytoplasma (strain OY-M).